We begin with the raw amino-acid sequence, 124 residues long: UPF0342 protein DSY2926 (124 aa).

The protein belongs to the UPF0342 family.

The chain is UPF0342 protein DSY2926 from Desulfitobacterium hafniense (strain Y51).